Here is a 74-residue protein sequence, read N- to C-terminus: Hadrucalcin (74 aa).

Residues 1-27 (MKTSSLTIIFIAVIITIICLNIHDIEA) form the signal peptide. Positions 28 to 39 (REIEFNAGRVVR) are excised as a propeptide. Disulfide bonds link C44–C58, C51–C62, and C57–C73. An essential for stimulation of [3H]ryanodine binding to RYR1 region spans residues 64–65 (RR).

In terms of tissue distribution, expressed by the venom gland.

The protein resides in the secreted. In terms of biological role, this toxin activates ryanodine receptors RyR1 and RyR2 by inducing a long-lasting subconductance state (35% of the full conductance stateon RyR1). Furthermore, it triggers calcium release from sarcoplasmic vesicles (11.8 nM are enough to induce a sharp release on RyR1, and 55% of the total calcium is released after toxin (100 nM) addition on RyR1) probably by acting as a cell-penetrating peptide (CPP). In addition, it has been shown to dose-dependently stimulate ryanodine binding to RyR1 (EC(50)=14.8 nM). It also augments the bell-shaped calcium-[3H]ryanodine binding curve that is maximal at about 10 uM calcium concentration. It binds a different site as ryanodine. It acts synergistically with caffeine. In vivo, intracerebroventricular injection into mice induces neurotoxic symptoms, followed by death. This chain is Hadrucalcin, found in Hoffmannihadrurus gertschi (Scorpion).